Reading from the N-terminus, the 38-residue chain is MRRALDGPGSSSLDTRQADKRQVRFRQCYFNPISCFRK.

A propeptide spanning residues 1-19 (MRRALDGPGSSSLDTRQAD) is cleaved from the precursor. Gln22 is subject to Pyrrolidone carboxylic acid; partial.

Belongs to the allatostatin family. In its non-pyroglutamate form, expressed in antennal lobe (AL), corpora cardiaca (CC), corpora allata (CA) and gnathal ganglion (GNG) with expression in AL detected in most animals and expression in CC, CA and GNG detected in few animals (at protein level). In its pyroglutamate form, expressed in antennal lobe (AL), corpora cardiaca (CC) and corpora allata (CA) with expression detected in few animals (at protein level). Not expressed in GNG (protein level).

It is found in the secreted. Its function is as follows. Strongly inhibits juvenile hormone biosynthesis. The chain is Allatostatin-C from Agrotis ipsilon (Black cutworm moth).